Here is a 600-residue protein sequence, read N- to C-terminus: Glutamine--fructose-6-phosphate aminotransferase [isomerizing] (600 aa).

The active-site Nucleophile; for GATase activity is the C2. The Glutamine amidotransferase type-2 domain occupies 2–217; the sequence is CGIVGYIGNE…DEELVIVRRD (216 aa). SIS domains lie at 283–422 and 452–590; these read IRAA…AAGK and IARD…VDKP. The For Fru-6P isomerization activity role is filled by K595.

Homodimer.

The protein resides in the cytoplasm. It carries out the reaction D-fructose 6-phosphate + L-glutamine = D-glucosamine 6-phosphate + L-glutamate. In terms of biological role, catalyzes the first step in hexosamine metabolism, converting fructose-6P into glucosamine-6P using glutamine as a nitrogen source. In Shouchella clausii (strain KSM-K16) (Alkalihalobacillus clausii), this protein is Glutamine--fructose-6-phosphate aminotransferase [isomerizing].